The sequence spans 118 residues: Basic phospholipase A2 nigexine (118 aa).

Cystine bridges form between C11/C70, C26/C117, C28/C44, C43/C98, C50/C91, C59/C84, and C77/C89. Ca(2+) contacts are provided by Y27, G29, and G31. H47 is a catalytic residue. D48 contacts Ca(2+). The Coagulation factor Xa binding motif motif lies at 52–69; it reads EKAGKMGCWPYFTLYKYK. D92 is a catalytic residue.

It belongs to the phospholipase A2 family. Group I subfamily. D49 sub-subfamily. Ca(2+) is required as a cofactor. Expressed by the venom gland.

Its subcellular location is the secreted. It carries out the reaction a 1,2-diacyl-sn-glycero-3-phosphocholine + H2O = a 1-acyl-sn-glycero-3-phosphocholine + a fatty acid + H(+). Snake venom phospholipase A2 (PLA2) that shows anticoagulant activity, has cytotoxic activity and affects neuromuscular transmission in vitro. PLA2 catalyzes the calcium-dependent hydrolysis of the 2-acyl groups in 3-sn-phosphoglycerides. This is Basic phospholipase A2 nigexine from Naja pallida (Red spitting cobra).